Consider the following 57-residue polypeptide: uncharacterized protein (57 aa).

The first 20 residues, 1-20 (MKKLALILFMGTLVSFYADA), serve as a signal peptide directing secretion.

This is an uncharacterized protein from Escherichia coli (strain K12).